A 73-amino-acid chain; its full sequence is Sec-independent protein translocase protein TatA (73 aa).

A helical transmembrane segment spans residues 1-21 (MGLSWQQLLILLLVVVVIFGT).

This sequence belongs to the TatA/E family. The Tat system comprises two distinct complexes: a TatABC complex, containing multiple copies of TatA, TatB and TatC subunits, and a separate TatA complex, containing only TatA subunits. Substrates initially bind to the TatABC complex, which probably triggers association of the separate TatA complex to form the active translocon.

It is found in the cell inner membrane. Functionally, part of the twin-arginine translocation (Tat) system that transports large folded proteins containing a characteristic twin-arginine motif in their signal peptide across membranes. TatA could form the protein-conducting channel of the Tat system. The sequence is that of Sec-independent protein translocase protein TatA from Histophilus somni (strain 129Pt) (Haemophilus somnus).